The sequence spans 283 residues: ATP synthase gamma chain (283 aa).

It belongs to the ATPase gamma chain family. F-type ATPases have 2 components, CF(1) - the catalytic core - and CF(0) - the membrane proton channel. CF(1) has five subunits: alpha(3), beta(3), gamma(1), delta(1), epsilon(1). CF(0) has three main subunits: a, b and c.

The protein localises to the cell inner membrane. In terms of biological role, produces ATP from ADP in the presence of a proton gradient across the membrane. The gamma chain is believed to be important in regulating ATPase activity and the flow of protons through the CF(0) complex. The polypeptide is ATP synthase gamma chain (Ehrlichia ruminantium (strain Gardel)).